Reading from the N-terminus, the 328-residue chain is MAKIYRETDADLSELKGKVIAVLGYGIQGRSWALNMRDSGLRVIVGVRPGKSRDLAKEEGFETYDVAEATKMADVVAVLLPDMVQPKVWTSEIGPNLKPGALVIFAHGFNIRYNLIKPPSNIDVTLVAPKAPGKAVRDEYLRGWGVPALVAVHQDYTGKALRRALAVAKANGFTRVGVIETTFAEETETDLIGEQTVLVGGLMELIKKGFETMIELGYQPEVAYFEVLNEAKLIMDLIWERGVYGMLNGVSETARYGGLTVGPYVLDNSVKERMRKAAERVRNGEFAREWLNEYEGGMKNLSRMLNEVKNHRLEVVGEDLRRLMRSGR.

Residues 2–181 enclose the KARI N-terminal Rossmann domain; it reads AKIYRETDAD…GFTRVGVIET (180 aa). Residues 25–28, R48, S52, and 82–85 contribute to the NADP(+) site; these read YGIQ and DMVQ. H107 is a catalytic residue. An NADP(+)-binding site is contributed by G133. One can recognise a KARI C-terminal knotted domain in the interval 182–327; sequence TFAEETETDL…EDLRRLMRSG (146 aa). Mg(2+)-binding residues include D190, E194, E226, and E230. S251 contributes to the substrate binding site.

This sequence belongs to the ketol-acid reductoisomerase family. Mg(2+) serves as cofactor.

The enzyme catalyses (2R)-2,3-dihydroxy-3-methylbutanoate + NADP(+) = (2S)-2-acetolactate + NADPH + H(+). The catalysed reaction is (2R,3R)-2,3-dihydroxy-3-methylpentanoate + NADP(+) = (S)-2-ethyl-2-hydroxy-3-oxobutanoate + NADPH + H(+). The protein operates within amino-acid biosynthesis; L-isoleucine biosynthesis; L-isoleucine from 2-oxobutanoate: step 2/4. Its pathway is amino-acid biosynthesis; L-valine biosynthesis; L-valine from pyruvate: step 2/4. Functionally, involved in the biosynthesis of branched-chain amino acids (BCAA). Catalyzes an alkyl-migration followed by a ketol-acid reduction of (S)-2-acetolactate (S2AL) to yield (R)-2,3-dihydroxy-isovalerate. In the isomerase reaction, S2AL is rearranged via a Mg-dependent methyl migration to produce 3-hydroxy-3-methyl-2-ketobutyrate (HMKB). In the reductase reaction, this 2-ketoacid undergoes a metal-dependent reduction by NADPH to yield (R)-2,3-dihydroxy-isovalerate. This is Ketol-acid reductoisomerase (NADP(+)) from Caldivirga maquilingensis (strain ATCC 700844 / DSM 13496 / JCM 10307 / IC-167).